The sequence spans 636 residues: Plasma kallikrein (636 aa).

Residues 1 to 19 form the signal peptide; the sequence is MIALRQAAYFICLFATVSC. Apple domains lie at 21 to 104, 111 to 194, 201 to 284, and 294 to 377; these read CLTQ…LKRC, CHRS…LKAC, CRVD…LLTC, and CHSK…LRLC. Intrachain disulfides connect Cys21–Cys104, Cys47–Cys77, Cys51–Cys57, Cys111–Cys194, Cys137–Cys166, Cys141–Cys147, Cys201–Cys284, Cys227–Cys256, Cys231–Cys237, Cys294–Cys377, Cys320–Cys349, and Cys324–Cys330. Residues Asn66 and Asn127 are each glycosylated (N-linked (GlcNAc...) asparagine). 2 N-linked (GlcNAc...) asparagine glycosylation sites follow: Asn361 and Asn397. In terms of domain architecture, Peptidase S1 spans 392–627; it reads IVGGTNASWG…YVDWILEKTQ (236 aa). Cysteines 420 and 436 form a disulfide. His435 (charge relay system) is an active-site residue. An N-linked (GlcNAc...) asparagine glycan is attached at Asn454. Residue Asp484 is the Charge relay system of the active site. Asn495 carries N-linked (GlcNAc...) asparagine glycosylation. 3 disulfide bridges follow: Cys518-Cys585, Cys549-Cys564, and Cys575-Cys603. Ser579 functions as the Charge relay system in the catalytic mechanism.

The protein belongs to the peptidase S1 family. Plasma kallikrein subfamily. Forms a heterodimer with SERPINA5. The zymogen is activated by factor XIIa, which cleaves the molecule into a light chain, which contains the active site, and a heavy chain, which associates with HMW kininogen. These chains are linked by one or more disulfide bonds.

The protein localises to the secreted. The enzyme catalyses Cleaves selectively Arg-|-Xaa and Lys-|-Xaa bonds, including Lys-|-Arg and Arg-|-Ser bonds in (human) kininogen to release bradykinin.. Inhibited by SERPINA5. Functionally, the enzyme cleaves Lys-Arg and Arg-Ser bonds. It activates, in a reciprocal reaction, factor XII after its binding to a negatively charged surface. It also releases bradykinin from HMW kininogen and may also play a role in the renin-angiotensin system by converting prorenin into renin. This is Plasma kallikrein (KLKB1) from Bos taurus (Bovine).